Reading from the N-terminus, the 275-residue chain is 2,3,4,5-tetrahydropyridine-2,6-dicarboxylate N-succinyltransferase (275 aa).

Positions 105 and 142 each coordinate substrate.

The protein belongs to the transferase hexapeptide repeat family. In terms of assembly, homotrimer.

It localises to the cytoplasm. It catalyses the reaction (S)-2,3,4,5-tetrahydrodipicolinate + succinyl-CoA + H2O = (S)-2-succinylamino-6-oxoheptanedioate + CoA. Its pathway is amino-acid biosynthesis; L-lysine biosynthesis via DAP pathway; LL-2,6-diaminopimelate from (S)-tetrahydrodipicolinate (succinylase route): step 1/3. The chain is 2,3,4,5-tetrahydropyridine-2,6-dicarboxylate N-succinyltransferase from Histophilus somni (strain 129Pt) (Haemophilus somnus).